A 127-amino-acid chain; its full sequence is Flagellar assembly factor FliW (127 aa).

This sequence belongs to the FliW family. In terms of assembly, interacts with translational regulator CsrA and flagellin(s).

It is found in the cytoplasm. Functionally, acts as an anti-CsrA protein, binds CsrA and prevents it from repressing translation of its target genes, one of which is flagellin. Binds to flagellin and participates in the assembly of the flagellum. In Campylobacter concisus (strain 13826), this protein is Flagellar assembly factor FliW.